Consider the following 410-residue polypeptide: Putative competence-damage inducible protein (410 aa).

The protein belongs to the CinA family.

This chain is Putative competence-damage inducible protein, found in Clostridium beijerinckii (strain ATCC 51743 / NCIMB 8052) (Clostridium acetobutylicum).